Consider the following 394-residue polypeptide: MAMEVGYLRHSTTITNGLCCNCDPKPRGARRVQTRLPGTLCLVKDTFTSSKAKLKKPSQREIFLTSRKRLNQIQAVSTAEKEREADKTSTPPIPSSIHDISNGDHILGFGADLTEDHPGYHDLEYKRRRSRIADLAKIHKIGEPIPCVDYTSEEIRVWGHVLDTLVDLYPTHACKEYLNCYELFNFKPNYIPQLQELSEVLERSTGWHIRPVAGLLHPRDFLNGLAFRTFHSTQYVRHGSNPMYTPEPDICHEVLGHVPILADPEFADLAWAIGQASLGASEKDIWHLTKLYWYTVEFGTVKEGNEIKAFGAGLLSSFGELKHMRVGTDGFMPEFVELDPFKKMPKMSYKDGYQKRYFLCESFADAAAKLRAYSRSILKPEVQSIKFGDTPIRL.

The transit peptide at 1–79 (MAMEVGYLRH…LNQIQAVSTA (79 aa)) directs the protein to the chloroplast. Residues 75–97 (AVSTAEKEREADKTSTPPIPSSI) form a disordered region. Fe cation contacts are provided by His252, His257, and Glu297.

The protein belongs to the biopterin-dependent aromatic amino acid hydroxylase family. In terms of assembly, forms monomers. Requires Fe(2+) as cofactor.

The protein localises to the plastid. The protein resides in the chloroplast. It catalyses the reaction (6R)-L-erythro-5,6,7,8-tetrahydrobiopterin + L-phenylalanine + O2 = (4aS,6R)-4a-hydroxy-L-erythro-5,6,7,8-tetrahydrobiopterin + L-tyrosine. Functionally, catalyzes the hydroxylation of L-phenylalanine to L-tyrosine. Does not seem to be tetrahydropterin-dependent and shows preference for 10-formyltetrahydrofolate as cosubstrate and electron donor. The polypeptide is Phenylalanine 4-monooxygenase, chloroplastic (Physcomitrium patens (Spreading-leaved earth moss)).